We begin with the raw amino-acid sequence, 334 residues long: TPR repeat-containing protein YsoA (334 aa).

TPR repeat units lie at residues 17-50, 52-84, and 195-230; these read KDRLVEKGMSSLKEKKYQEALELFSEAMKYDDTE, DLHLGMAICFLELGELEEAESVCEKMLKEGYGH, and HPIIKTMIVMLLAEHEYSKPVHISKFGESLTIEPSE.

This is TPR repeat-containing protein YsoA (ysoA) from Bacillus subtilis (strain 168).